The primary structure comprises 302 residues: Probable alpha-L-glutamate ligase (302 aa).

The ATP-grasp domain occupies 104–287 (MQLLSRKGIG…IAGMVFEFLE (184 aa)). ATP-binding positions include Lys141, 178–179 (EF), Asp187, and 211–213 (RSN). Positions 248, 260, and 262 each coordinate Mg(2+). Mn(2+) contacts are provided by Asp248, Glu260, and Asn262.

It belongs to the RimK family. It depends on Mg(2+) as a cofactor. Mn(2+) is required as a cofactor.

The chain is Probable alpha-L-glutamate ligase from Psychromonas ingrahamii (strain DSM 17664 / CCUG 51855 / 37).